Consider the following 141-residue polypeptide: Hemoglobin subunit alpha (141 aa).

A Globin domain is found at 1-141 (VLSPADKTNV…VSTVLTSKYR (141 aa)). Phosphoserine is present on S3. At K7 the chain carries N6-succinyllysine. Residue T8 is modified to Phosphothreonine. K11 bears the N6-succinyllysine mark. At K16 the chain carries N6-acetyllysine; alternate. K16 bears the N6-succinyllysine; alternate mark. Y24 is subject to Phosphotyrosine. K40 is subject to N6-succinyllysine. An O2-binding site is contributed by H58. H87 serves as a coordination point for heme b. Residue S102 is modified to Phosphoserine. T108 carries the phosphothreonine modification. S124 and S131 each carry phosphoserine. Phosphothreonine occurs at positions 134 and 137. Position 138 is a phosphoserine (S138).

This sequence belongs to the globin family. Heterotetramer of two alpha chains and two beta chains. In terms of tissue distribution, red blood cells.

In terms of biological role, involved in oxygen transport from the lung to the various peripheral tissues. Functionally, hemopressin acts as an antagonist peptide of the cannabinoid receptor CNR1. Hemopressin-binding efficiently blocks cannabinoid receptor CNR1 and subsequent signaling. In Tursiops truncatus (Atlantic bottle-nosed dolphin), this protein is Hemoglobin subunit alpha (HBA).